A 750-amino-acid chain; its full sequence is Iron-sulfur clusters transporter ATM1, mitochondrial (750 aa).

The transit peptide at 1–16 (MFIRNVKLIKPSPVRF) directs the protein to the mitochondrion. The Mitochondrial matrix portion of the chain corresponds to 17–124 (ISPIPFSFPI…PKNNLNFKIR (108 aa)). Composition is skewed to low complexity over residues 43-75 (TSNF…KTLS) and 87-100 (DNDT…SSEN). The disordered stretch occupies residues 43-100 (TSNFKSTSSSSSLKSTSTSTSTSTSKTTPKTLSKPPPKVKPPIQDNDTTSSGSSSSEN). Residues 125–146 (VIIALSLLVGAKILNVQVPFYF) form a helical membrane-spanning segment. The ABC transmembrane type-1 domain maps to 125-415 (VIIALSLLVG…LGSVYRELKQ (291 aa)). The Mitochondrial intermembrane segment spans residues 147–169 (KQIIDTMNIDWTNEVGVFSTVIG). Residues 170 to 193 (SLILAYGGARFGAVLFGELRNAIF) traverse the membrane as a helical segment. The Mitochondrial matrix segment spans residues 194-242 (ASVAQSAIRRVAYNTFVKLLNMDLQFHLSRQTGGLTRAIDRGTKGISYV). The chain crosses the membrane as a helical span at residues 243–266 (LSAMVFHIIPITLEISIVCGILTY). Position 267 (Asn-267) is a topological domain, mitochondrial intermembrane. The helical transmembrane segment at 268–288 (YGASFAAMTFVTMLAYSIFTI) threads the bilayer. Residues 289–354 (QTTAWRTKFR…SSVKIATSLA (66 aa)) lie on the Mitochondrial matrix side of the membrane. Residues 294–298 (RTKFR) and 357–360 (NSGQ) contribute to the glutathione site. Residues 355-373 (FLNSGQNFIFTSALTAMMY) form a helical membrane-spanning segment. The Mitochondrial intermembrane segment spans residues 374-388 (MGCQGVYTGELTVGD). The helical transmembrane segment at 389-410 (LVLINQLVFQLSVPLNFLGSVY) threads the bilayer. Residue Gly-407 coordinates glutathione. Residues 411–750 (RELKQSLLDM…LFNSQTFEKK (340 aa)) lie on the Mitochondrial matrix side of the membrane. The interval 437–462 (PNAPPLKLNNNNNNNNNNNNNNNNSL) is disordered. Low complexity predominate over residues 445–460 (NNNNNNNNNNNNNNNN). One can recognise an ABC transporter domain in the interval 466 to 702 (IRFENVSFGY…QPNSLYAQLW (237 aa)). ATP is bound by residues Tyr-475 and 499–510 (GPSGSGKSTILR).

Belongs to the ABC transporter superfamily. ABCB family. Heavy Metal importer (TC 3.A.1.210) subfamily. In terms of assembly, homodimer.

Its subcellular location is the mitochondrion inner membrane. Its function is as follows. Performs an essential function in the generation of cytoplasmic iron-sulfur proteins by mediating the ATP-dependent export of Fe/S cluster precursors synthesized by NFS1 and other mitochondrial proteins. Hydrolyzes ATP. Binds glutathione and may function by transporting a glutathione-conjugated iron-sulfur compound. In Candida albicans (strain SC5314 / ATCC MYA-2876) (Yeast), this protein is Iron-sulfur clusters transporter ATM1, mitochondrial.